The sequence spans 150 residues: Large ribosomal subunit protein bL9 (150 aa).

The protein belongs to the bacterial ribosomal protein bL9 family.

Binds to the 23S rRNA. The protein is Large ribosomal subunit protein bL9 of Ralstonia nicotianae (strain ATCC BAA-1114 / GMI1000) (Ralstonia solanacearum).